The following is a 91-amino-acid chain: Probable Fe(2+)-trafficking protein (91 aa).

The protein belongs to the Fe(2+)-trafficking protein family. As to quaternary structure, monomer.

Could be a mediator in iron transactions between iron acquisition and iron-requiring processes, such as synthesis and/or repair of Fe-S clusters in biosynthetic enzymes. The protein is Probable Fe(2+)-trafficking protein of Citrobacter koseri (strain ATCC BAA-895 / CDC 4225-83 / SGSC4696).